Reading from the N-terminus, the 578-residue chain is MTAIANACLSCLSAVDRWCHITACLGPIGGRSRDGIYETTLADNEREAVSDLLGYLENRAETDFFSGEPLRALSTLVYSDNVDLQRSASLTFAEITERDVREVDRDTLEPILFLLQSSDIEVQRAASAALGNLAVNAENKVLIVALGGLTPLIRQMMSPNVEVQCNAVGCITNLATHEDNKAKIARSGALGPLIRLAKSKDMRVQRNATGALLNMTHSDDNRQQLVNAGAIPVLVQLLSSPDVDVQYYCTTALSNIAVDASNRKRLAQTESRLVQSLVHLMDSSTPKVQCQAALALRNLASDEKYQLEIVRAKGLPPLLRLLQSSYLPLILSAVACIRNISIHPLNESPIIDAGFLKPLVDLLGSTDNEEIQCHAISTLRNLAASSDRNKELVLQAGAVQKCKDLVLRVPLSVQSEMTAAIAVLALSDELKPHLLNLGVFDVLIPLTNSESIEVQGNSAAALGNLSSKVGDYSIFVRDWADPNGGIHGYLKRFLASGDPTFQHIAIWTLLQLLESEDKRLIGYISKSDDIVQMVKTISDKNIESDEEDGEDGEAEVIALARRCLGLLGNGPKQTLVEG.

ARM repeat units lie at residues 58-95 (NRAETDFFSGEPLRALSTLVYSDNVDLQRSASLTFAEI), 96-135 (TERDVREVDRDTLEPILFLLQSSDIEVQRAASAALGNLAV), 137-176 (AENKVLIVALGGLTPLIRQMMSPNVEVQCNAVGCITNLAT), 178-217 (EDNKAKIARSGALGPLIRLAKSKDMRVQRNATGALLNMTH), 219-258 (DDNRQQLVNAGAIPVLVQLLSSPDVDVQYYCTTALSNIAV), 262-301 (NRKRLAQTESRLVQSLVHLMDSSTPKVQCQAALALRNLAS), 303-342 (EKYQLEIVRAKGLPPLLRLLQSSYLPLILSAVACIRNISI), 344-384 (PLNE…NLAA), and 428-467 (DELKPHLLNLGVFDVLIPLTNSESIEVQGNSAAALGNLSS).

This sequence belongs to the beta-catenin family.

It is found in the vacuole membrane. In terms of biological role, functions in both vacuole inheritance and protein targeting from the cytoplasm to vacuole. In Aspergillus fumigatus (strain ATCC MYA-4609 / CBS 101355 / FGSC A1100 / Af293) (Neosartorya fumigata), this protein is Vacuolar protein 8 (vac8).